The following is a 453-amino-acid chain: tRNA-2-methylthio-N(6)-dimethylallyladenosine synthase (453 aa).

Residues 11–131 (KSFHVKSFGC…LPQLVADAAE (121 aa)) enclose the MTTase N-terminal domain. [4Fe-4S] cluster-binding residues include cysteine 20, cysteine 56, cysteine 94, cysteine 167, cysteine 171, and cysteine 174. Residues 153-385 (RRQGPTAFLT…QALLNEQQHR (233 aa)) form the Radical SAM core domain. In terms of domain architecture, TRAM spans 388–449 (LATVGKRCEV…PNSLSGALVE (62 aa)).

Belongs to the methylthiotransferase family. MiaB subfamily. As to quaternary structure, monomer. [4Fe-4S] cluster serves as cofactor.

The protein localises to the cytoplasm. It catalyses the reaction N(6)-dimethylallyladenosine(37) in tRNA + (sulfur carrier)-SH + AH2 + 2 S-adenosyl-L-methionine = 2-methylsulfanyl-N(6)-dimethylallyladenosine(37) in tRNA + (sulfur carrier)-H + 5'-deoxyadenosine + L-methionine + A + S-adenosyl-L-homocysteine + 2 H(+). In terms of biological role, catalyzes the methylthiolation of N6-(dimethylallyl)adenosine (i(6)A), leading to the formation of 2-methylthio-N6-(dimethylallyl)adenosine (ms(2)i(6)A) at position 37 in tRNAs that read codons beginning with uridine. The polypeptide is tRNA-2-methylthio-N(6)-dimethylallyladenosine synthase (Rhizorhabdus wittichii (strain DSM 6014 / CCUG 31198 / JCM 15750 / NBRC 105917 / EY 4224 / RW1) (Sphingomonas wittichii)).